The sequence spans 477 residues: Diphthine methyltransferase (477 aa).

WD repeat units lie at residues 194 to 232, 236 to 276, and 422 to 464; these read HFEA…TPVF, RHCM…QPLA, and VKTR…ARTL.

It belongs to the DPH7 family. As to quaternary structure, interacts with INCA1.

It catalyses the reaction diphthine methyl ester-[translation elongation factor 2] + H2O = diphthine-[translation elongation factor 2] + methanol + H(+). Its pathway is protein modification; peptidyl-diphthamide biosynthesis. Its function is as follows. Catalyzes the demethylation of diphthine methyl ester to form diphthine, an intermediate diphthamide biosynthesis, a post-translational modification of histidine which occurs in translation elongation factor 2 (EEF2). The polypeptide is Diphthine methyltransferase (Dph7) (Mus musculus (Mouse)).